We begin with the raw amino-acid sequence, 473 residues long: Uronate isomerase (473 aa).

It belongs to the metallo-dependent hydrolases superfamily. Uronate isomerase family.

The enzyme catalyses D-glucuronate = D-fructuronate. The catalysed reaction is aldehydo-D-galacturonate = keto-D-tagaturonate. It participates in carbohydrate metabolism; pentose and glucuronate interconversion. In Bacillus subtilis (strain 168), this protein is Uronate isomerase (uxaC).